The chain runs to 175 residues: Translation initiation factor IF-3, chloroplastic (175 aa).

It belongs to the IF-3 family. Monomer.

It is found in the plastid. The protein localises to the chloroplast. In terms of biological role, IF-3 binds to the 30S ribosomal subunit and shifts the equilibrium between 70S ribosomes and their 50S and 30S subunits in favor of the free subunits, thus enhancing the availability of 30S subunits on which protein synthesis initiation begins. The sequence is that of Translation initiation factor IF-3, chloroplastic from Cyanidioschyzon merolae (strain NIES-3377 / 10D) (Unicellular red alga).